Reading from the N-terminus, the 303-residue chain is T-box protein 38 (303 aa).

The segment at residues 14 to 195 is a DNA-binding region (T-box); it reads LSTPEIWEEF…HNKFASGFRS (182 aa). Positions 193–225 are disordered; the sequence is FRSNGKRRLSSDSENSENSPPKRSKLVTPPTIS. Over residues 204 to 213 the composition is skewed to low complexity; it reads DSENSENSPP.

The protein localises to the nucleus. In terms of biological role, transcription factor. Required for mesodermal induction, acting redundantly with transcription factor tbx-37. Together with tbx-37, acts by inducing cell fates in the AB lineage, thereby playing a role in development of the anterior pharynx. The chain is T-box protein 38 (tbx-38) from Caenorhabditis elegans.